We begin with the raw amino-acid sequence, 259 residues long: uncharacterized protein (259 aa).

3 disordered regions span residues 22-68 (GLQP…VSFG), 111-133 (REEQ…DEVE), and 181-202 (LGGK…KKKQ). Positions 50-63 (NEEEDAISDMEDKE) are enriched in acidic residues. S127 carries the phosphoserine modification.

This is an uncharacterized protein from Schizosaccharomyces pombe (strain 972 / ATCC 24843) (Fission yeast).